A 780-amino-acid chain; its full sequence is ATP-dependent 6-phosphofructokinase, muscle type (780 aa).

Residue Thr-2 is modified to N-acetylthreonine. Positions 2 to 390 (THEEHHAAKS…NWEVYKLLAH (389 aa)) are N-terminal catalytic PFK domain 1. Residues Gly-25, 88–89 (RC), and 118–121 (GDGS) each bind ATP. Asp-119 is a binding site for Mg(2+). Residues 164–166 (SID), Arg-201, 208–210 (MGR), Glu-264, Arg-292, and 298–301 (HVQR) contribute to the substrate site. Catalysis depends on Asp-166, which acts as the Proton acceptor. Ser-377 is modified (phosphoserine). The interval 391–401 (VRPPVTKSGSY) is interdomain linker. Residues 402–780 (TVAVMNVGAP…TRKRSGEATI (379 aa)) form a C-terminal regulatory PFK domain 2 region. Beta-D-fructose 2,6-bisphosphate-binding positions include Arg-471 and 528-532 (TVSNN). Residue Ser-530 is glycosylated (O-linked (GlcNAc) serine). Lys-557 carries the post-translational modification N6-(2-hydroxyisobutyryl)lysine. Beta-D-fructose 2,6-bisphosphate-binding positions include Arg-566, 573-575 (MGG), Glu-629, Arg-655, and 661-664 (HMQQ). Ser-667 carries the phosphoserine modification. Residue Arg-735 coordinates beta-D-fructose 2,6-bisphosphate. Residue Ser-775 is modified to Phosphoserine.

Belongs to the phosphofructokinase type A (PFKA) family. ATP-dependent PFK group I subfamily. Eukaryotic two domain clade 'E' sub-subfamily. As to quaternary structure, homo- and heterotetramers. Phosphofructokinase (PFK) enzyme functions as a tetramer composed of different combinations of 3 types of subunits, called PFKM (M), PFKL (L) and PFKP (P). The composition of the PFK tetramer differs according to the tissue type it is present in. The kinetic and regulatory properties of the tetrameric enzyme are dependent on the subunit composition, hence can vary across tissues. Interacts (via C-terminus) with HK1 (via N-terminal spermatogenic cell-specific region). Mg(2+) serves as cofactor. GlcNAcylation decreases enzyme activity.

It is found in the cytoplasm. It catalyses the reaction beta-D-fructose 6-phosphate + ATP = beta-D-fructose 1,6-bisphosphate + ADP + H(+). It functions in the pathway carbohydrate degradation; glycolysis; D-glyceraldehyde 3-phosphate and glycerone phosphate from D-glucose: step 3/4. With respect to regulation, allosterically activated by ADP, AMP, or fructose 2,6-bisphosphate, and allosterically inhibited by ATP or citrate. Its function is as follows. Catalyzes the phosphorylation of D-fructose 6-phosphate to fructose 1,6-bisphosphate by ATP, the first committing step of glycolysis. The sequence is that of ATP-dependent 6-phosphofructokinase, muscle type (PFKM) from Sus scrofa (Pig).